Reading from the N-terminus, the 137-residue chain is Protein BNS1 (137 aa).

Functionally, component of the FEAR (CDC14 early anaphase release) network which promotes CDC14 release from the nucleolus during early anaphase and is required for the efficient segregation of telomeric and nucleolar regions. Although BNS1 can partially compensate for a lack of SPO12 function when overexpressed, it does not appear to play any role in controlling meiotic nuclear division. The polypeptide is Protein BNS1 (BNS1) (Saccharomyces cerevisiae (strain ATCC 204508 / S288c) (Baker's yeast)).